Here is a 337-residue protein sequence, read N- to C-terminus: MTCTIVVGGQWGDEGKGKIISYLCKKDNPSIIARGGVGPNAGHTVEVDGEKYGIRMVPTGFPNVNAKLAVGAGVLTDPEVLLKEIKMLEKFNVGERMIIDYRCGIIEDVHKETDKSNEHLSKEIGSTGTGCGPANVDRAMRTLKQGKDVESISKYLGDVSEEVNEALESGDNVLIEGTQGSLLSLFYGSYPYVTSKDTNAASFAADVGVGPTKIDEVVAVFKSYPTRVGEGPFPTEMTVEEAESLGVVEYGTVTGRRRRVGYFDHDLAKKVCRLNGATQIAITCLDKYDTDCYGIIEYDKLSEKGKAFIKEVEEKVGVKVTLISTGPELGQTIDVRK.

GTP is bound by residues 12 to 18 (GDEGKGK) and 42 to 44 (GHT). Residue Asp-13 is the Proton acceptor of the active site. Mg(2+) is bound by residues Asp-13 and Gly-42. IMP contacts are provided by residues 13–16 (DEGK), 40–43 (NAGH), Thr-127, Arg-141, Gln-179, Thr-194, and Arg-256. His-43 acts as the Proton donor in catalysis. 252 to 258 (TVTGRRR) serves as a coordination point for substrate. GTP is bound by residues Arg-258, 284–286 (CLD), and 324–326 (STG).

This sequence belongs to the adenylosuccinate synthetase family. In terms of assembly, homodimer. Mg(2+) is required as a cofactor.

Its subcellular location is the cytoplasm. It carries out the reaction IMP + L-aspartate + GTP = N(6)-(1,2-dicarboxyethyl)-AMP + GDP + phosphate + 2 H(+). Its pathway is purine metabolism; AMP biosynthesis via de novo pathway; AMP from IMP: step 1/2. In terms of biological role, plays an important role in the de novo pathway of purine nucleotide biosynthesis. Catalyzes the first committed step in the biosynthesis of AMP from IMP. The polypeptide is Adenylosuccinate synthetase (Methanococcus maripaludis (strain C5 / ATCC BAA-1333)).